The following is a 319-amino-acid chain: MKRIAILTSGGDAPGMNAATRAVVRKAIYEGLEVYGINYGFLGLVNGDIRKLELGSVGDLLHRGGTFLYSARYPEFATEEGQLKGIEQLKKHQIDGLVVIGGDGSYHGAEALTKRGFPTIGIPGTIDNDISGTDFTIGFDTALNTVLDALDKIRDTATSHERTFIIEVMGRDAGDIALWSGLAGGAEAIIVPEESFNMDDVVDRLNKGRERGKKHSIIVVAEGVMSGNEFAKQLAEYGDYHARVTVLGHVQRGGSPTAFDRVLASRLGARSVELLLENRGGLAVGIRENRIVENNIGEILKEKHTLDQKLFDLASILSI.

Glycine 11 contacts ATP. 21–25 (RAVVR) lines the ADP pocket. ATP-binding positions include 72–73 (RY) and 102–105 (GDGS). A Mg(2+)-binding site is contributed by aspartate 103. 125-127 (TID) is a binding site for substrate. The active-site Proton acceptor is aspartate 127. Residue arginine 154 participates in ADP binding. Residues arginine 162 and 169-171 (MGR) contribute to the substrate site. ADP-binding positions include 185–187 (GAE), arginine 211, and 213–215 (KKH). Residues glutamate 222, arginine 243, and 249-252 (HVQR) each bind substrate.

Belongs to the phosphofructokinase type A (PFKA) family. ATP-dependent PFK group I subfamily. Prokaryotic clade 'B1' sub-subfamily. Homotetramer. Requires Mg(2+) as cofactor.

It localises to the cytoplasm. It catalyses the reaction beta-D-fructose 6-phosphate + ATP = beta-D-fructose 1,6-bisphosphate + ADP + H(+). Its pathway is carbohydrate degradation; glycolysis; D-glyceraldehyde 3-phosphate and glycerone phosphate from D-glucose: step 3/4. Its activity is regulated as follows. Allosterically activated by ADP and other diphosphonucleosides, and allosterically inhibited by phosphoenolpyruvate. Functionally, catalyzes the phosphorylation of D-fructose 6-phosphate to fructose 1,6-bisphosphate by ATP, the first committing step of glycolysis. The polypeptide is ATP-dependent 6-phosphofructokinase (Listeria innocua serovar 6a (strain ATCC BAA-680 / CLIP 11262)).